A 1119-amino-acid polypeptide reads, in one-letter code: SH3 and PX domain-containing protein 2A (1119 aa).

One can recognise a PX domain in the interval 4 to 128; the sequence is RTVLDVKVVD…RFFETKPDDI (125 aa). SH3 domains follow at residues 149–208 and 249–308; these read MVLE…SQSG and SREE…KLKD. Disordered regions lie at residues 388-429, 494-595, 641-815, 914-941, and 957-1004; these read SSAT…PPRR, APSS…SNPA, SSDD…HESV, NLRS…AMLN, and RPQS…SSFT. The 60-residue stretch at 445–504 folds into the SH3 3 domain; that stretch reads TVEAEYYTIAEFQSSISDGISFRGGQKADVIEKNSGGWWYVQIGDTEGWAPSSYIDKRKK. 2 stretches are compositionally biased toward basic and acidic residues: residues 581–590 and 688–718; these read PKPEPRKFEI and GRAE…DVEI. Low complexity predominate over residues 779 to 802; that stretch reads TASVVSSEDSTSSRSTSDLSSVYS. The segment covering 806-815 has biased composition (basic and acidic residues); it reads RGGESDHESV. Residues 812–871 enclose the SH3 4 domain; that stretch reads HESVLFRTTDAYERAQESELSFPAGVEVEVLEKQESGWWFVRWGSDEGWVPTFYLEPIKH. In terms of domain architecture, SH3 5 spans 1058-1119; the sequence is NLREVYVSIA…VPSNYLERKK (62 aa).

It belongs to the SH3PXD2 family. Tyrosine phosphorylated.

Its subcellular location is the cytoplasm. The protein resides in the cell projection. It is found in the podosome. In terms of biological role, adapter protein involved in invadopodia and podosome formation and extracellular matrix degradation. The sequence is that of SH3 and PX domain-containing protein 2A (sh3pxd2a) from Danio rerio (Zebrafish).